The chain runs to 952 residues: Inter-alpha-trypsin inhibitor heavy chain H5 (952 aa).

Positions 1–17 (MLLLLGLCLGLPLFSES) are cleaved as a signal peptide. One can recognise a VIT domain in the interval 35 to 161 (VPRQLRLLQR…KAAFFLSYEE (127 aa)). 4 N-linked (GlcNAc...) asparagine glycosylation sites follow: Asn97, Asn127, Asn136, and Asn231. Positions 113–131 (QKDKKSSESVKDKRNRTSD) are enriched in basic and acidic residues. The interval 113–138 (QKDKKSSESVKDKRNRTSDDNEENGS) is disordered. Residues 295 to 478 (NVVFVLDISA…AQLIGFYDEI (184 aa)) form the VWFA domain. Residues Asn508, Asn776, Asn795, and Asn862 are each glycosylated (N-linked (GlcNAc...) asparagine). The tract at residues 933–952 (ALGLSTPRKPETDRPHEESV) is disordered. Basic and acidic residues predominate over residues 940 to 952 (RKPETDRPHEESV).

This sequence belongs to the ITIH family.

It localises to the secreted. Its function is as follows. May act as a tumor suppressor. The polypeptide is Inter-alpha-trypsin inhibitor heavy chain H5 (Itih5) (Mus musculus (Mouse)).